The chain runs to 233 residues: 7-cyano-7-deazaguanine synthase (233 aa).

11-21 contributes to the ATP binding site; sequence LSGGLDSSTVL. Zn(2+)-binding residues include C195, C203, C206, and C209.

The protein belongs to the QueC family. Zn(2+) is required as a cofactor.

The catalysed reaction is 7-carboxy-7-deazaguanine + NH4(+) + ATP = 7-cyano-7-deazaguanine + ADP + phosphate + H2O + H(+). It functions in the pathway purine metabolism; 7-cyano-7-deazaguanine biosynthesis. Catalyzes the ATP-dependent conversion of 7-carboxy-7-deazaguanine (CDG) to 7-cyano-7-deazaguanine (preQ(0)). This chain is 7-cyano-7-deazaguanine synthase, found in Thermosynechococcus vestitus (strain NIES-2133 / IAM M-273 / BP-1).